The following is a 507-amino-acid chain: Cuticlin-4 (507 aa).

An N-terminal signal peptide occupies residues 1–19 (MFHFTRILAAFLLPTLCFC). The Extracellular segment spans residues 20-471 (GYSTAPSSTV…KTCFSTSRMY (452 aa)). Residues 42-280 (VCETASISLL…YGCSNTQPQC (239 aa)) enclose the ZP domain. Residues 292-350 (KTTETAEPYPYDSHESGYPTRPANYPVASSRYPIPTTQAPASYPSSPAPPPPGADIDNG) are disordered. N-linked (GlcNAc...) asparagine glycosylation is found at Asn374 and Asn408. The helical transmembrane segment at 472–492 (FTLILLCLLFATTVVVFIVIV) threads the bilayer. Topologically, residues 493-507 (QKQRQILAQTAFFKP) are cytoplasmic.

It is found in the cell membrane. In terms of biological role, plays a role in alae formation and subsequent cuticle attachment in adults. The chain is Cuticlin-4 from Caenorhabditis elegans.